We begin with the raw amino-acid sequence, 426 residues long: MFADFSAAAMELGEVLGLQGLTVPSTKEGDLSLIKRAAAGSFTQAAAASYPSPFLDEQKMLRFAKAAHTLPSGLDFGRENEQRFLLSRTKRPFTPSQWMELEHQALIYKYLNAKAPIPSSLLISISKSFRSSANRMSWRPLYQGFPNADSDPEPGRCRRTDGKKWRCSKEAMADHKYCERHINRNRHRSRKPVENQSRKTVKETPCAGSLPSSVGQGSFKKAKVNEMKPRSISYWTDSLNRTMANKEKGNKAAEENNGPLLNLTNQQPTLSLFSQLKQQNKPEKFNTAGDSESISSNTMLKPWESSNQQNNKSIPFTKMHDRGCLQSVLQNFSLPKDEKMEFQKSKDSNVMTVPSTFYSSPEDPRVSCHAPNMAQMQEDSISSSWEMPQGGPLGEILTNSKNPDDSIMKPEARPYGWLLNLEDHAM.

Residues 92-127 (PFTPSQWMELEHQALIYKYLNAKAPIPSSLLISISK) form the QLQ domain. The region spanning 151–195 (DPEPGRCRRTDGKKWRCSKEAMADHKYCERHINRNRHRSRKPVEN) is the WRC domain. 2 consecutive short sequence motifs (bipartite nuclear localization signal) follow at residues 156–166 (RCRRTDGKKWR) and 184–191 (RNRHRSRK). Residues 184 to 222 (RNRHRSRKPVENQSRKTVKETPCAGSLPSSVGQGSFKKA) form a disordered region. A compositionally biased stretch (basic and acidic residues) spans 191–202 (KPVENQSRKTVK).

Belongs to the GRF family.

Its subcellular location is the nucleus. Transcription activator that plays a regulatory role in gibberellin-induced stem elongation. This Oryza sativa subsp. japonica (Rice) protein is Growth-regulating factor 9 (GRF9).